Reading from the N-terminus, the 276-residue chain is HTH-type transcriptional activator RhaR (276 aa).

An HTH araC/xylS-type domain is found at 174 to 272; the sequence is ESLFSALNQS…SCTPTEYRSR (99 aa). 2 consecutive DNA-binding regions (H-T-H motif) follow at residues 191–212 and 239–262; these read ADFCRQHQLAVSSVRRIFKQQT and VANIAIRCGYSDSNYFSSVFGKTF.

Binds DNA as a dimer.

It is found in the cytoplasm. Functionally, activates expression of the rhaSR operon in response to L-rhamnose. This Mannheimia succiniciproducens (strain KCTC 0769BP / MBEL55E) protein is HTH-type transcriptional activator RhaR.